The following is a 133-amino-acid chain: uncharacterized protein (133 aa).

The first 23 residues, 1–23 (MSRKIIPALTIFFGPILILTAIT), serve as a signal peptide directing secretion. The segment at 82–133 (ESIKNQNSLNKEKQQQQQQQQQQQQQQQQQQQQQQKPNTPPTPLTTPSTPKK) is disordered. Residues 96 to 118 (QQQQQQQQQQQQQQQQQQQQQKP) show a composition bias toward low complexity.

It localises to the secreted. This is an uncharacterized protein from Dictyostelium discoideum (Social amoeba).